Consider the following 103-residue polypeptide: Small ribosomal subunit protein uS10 (103 aa).

This sequence belongs to the universal ribosomal protein uS10 family. As to quaternary structure, part of the 30S ribosomal subunit.

Involved in the binding of tRNA to the ribosomes. This Borreliella burgdorferi (strain ATCC 35210 / DSM 4680 / CIP 102532 / B31) (Borrelia burgdorferi) protein is Small ribosomal subunit protein uS10.